The primary structure comprises 207 residues: Putative 3-methyladenine DNA glycosylase (207 aa).

This sequence belongs to the DNA glycosylase MPG family.

The chain is Putative 3-methyladenine DNA glycosylase from Listeria monocytogenes serotype 4b (strain CLIP80459).